Here is a 957-residue protein sequence, read N- to C-terminus: Leucine--tRNA ligase (957 aa).

A 'HIGH' region motif is present at residues 66–77 (PYPSGAGLHVGH). The 'KMSKS' region signature appears at 728–732 (KMGKS). Lys-731 serves as a coordination point for ATP.

The protein belongs to the class-I aminoacyl-tRNA synthetase family.

The protein localises to the cytoplasm. The catalysed reaction is tRNA(Leu) + L-leucine + ATP = L-leucyl-tRNA(Leu) + AMP + diphosphate. This chain is Leucine--tRNA ligase, found in Streptomyces griseus subsp. griseus (strain JCM 4626 / CBS 651.72 / NBRC 13350 / KCC S-0626 / ISP 5235).